The primary structure comprises 246 residues: Ribonuclease 3 (246 aa).

The RNase III domain maps to 10–143 (LERLEQALDY…LLGAIYLDGG (134 aa)). E56 is a binding site for Mg(2+). D60 is a catalytic residue. The Mg(2+) site is built by N129 and E132. Residue E132 is part of the active site. In terms of domain architecture, DRBM spans 170–239 (DYKTLLQEYL…AQQALELLIE (70 aa)).

This sequence belongs to the ribonuclease III family. As to quaternary structure, homodimer. The cofactor is Mg(2+).

The protein resides in the cytoplasm. The catalysed reaction is Endonucleolytic cleavage to 5'-phosphomonoester.. Digests double-stranded RNA. Involved in the processing of primary rRNA transcript to yield the immediate precursors to the large and small rRNAs (23S and 16S). Processes some mRNAs, and tRNAs when they are encoded in the rRNA operon. Processes pre-crRNA and tracrRNA of type II CRISPR loci if present in the organism. The chain is Ribonuclease 3 from Magnetococcus marinus (strain ATCC BAA-1437 / JCM 17883 / MC-1).